Reading from the N-terminus, the 614-residue chain is Vitamin B12 transporter BtuB (614 aa).

A signal peptide spans Met-1–Ala-20. Residues Gln-21 to Gly-157 lie on the Periplasmic side of the membrane. The TonB box signature appears at Asp-26 to Asn-33. Positions Pro-38–Thr-152 constitute a TBDR plug domain. Cyanocob(III)alamin is bound by residues Leu-83, Ser-85, Asn-92, and Val-110 to Ser-111. Residues Glu-155–Phe-614 form the TBDR beta-barrel domain. The beta stranded transmembrane segment at Thr-158–Gly-165 threads the bilayer. Residues Ser-166–Ser-168 lie on the Extracellular side of the membrane. Residues Tyr-169 to Gln-178 traverse the membrane as a beta stranded segment. Residues Gln-179–Lys-183 lie on the Periplasmic side of the membrane. A beta stranded transmembrane segment spans residues Thr-184–Thr-195. Over His-196–Gly-216 the chain is Extracellular. Ca(2+) is bound by residues Asp-199, Gln-211, Asp-213, and Asp-215. A beta stranded membrane pass occupies residues Phe-217–Glu-227. The Periplasmic portion of the chain corresponds to His-228 to Thr-231. The beta stranded transmembrane segment at Asp-232 to Asn-248 threads the bilayer. Tyr-249 and Asp-250 together coordinate Ca(2+). The Extracellular portion of the chain corresponds to Tyr-249–Thr-262. Ala-251 provides a ligand contact to cyanocob(III)alamin. Asp-261 contributes to the Ca(2+) binding site. Residues Arg-263 to Asn-277 form a beta stranded membrane-spanning segment. Position 278 (Gly-278) is a topological domain, periplasmic. Residues Glu-279–Asn-296 form a beta stranded membrane-spanning segment. The Extracellular segment spans residues Tyr-297–Ala-308. Position 309 (Thr-309) interacts with cyanocob(III)alamin. The chain crosses the membrane as a beta stranded span at residues Thr-309–Ile-325. The Periplasmic segment spans residues Val-326–Gly-327. Residues His-328 to Trp-337 traverse the membrane as a beta stranded segment. The Extracellular segment spans residues Gln-338–Gly-352. Residues Tyr-353–Gly-369 traverse the membrane as a beta stranded segment. Residue Asp-370 is a topological domain, periplasmic. A beta stranded transmembrane segment spans residues Phe-371 to Asp-381. Residues Asn-382–Gln-384 are Extracellular-facing. The beta stranded transmembrane segment at Phe-385–Ile-400 threads the bilayer. At Glu-401–Gly-402 the chain is on the periplasmic side. A beta stranded membrane pass occupies residues Tyr-403–Asn-417. Residues Leu-418–Glu-433 are Extracellular-facing. The beta stranded transmembrane segment at Lys-434–Glu-443 threads the bilayer. Topologically, residues Gly-444–Gly-448 are periplasmic. A beta stranded membrane pass occupies residues Val-449–Asn-458. Residues Asp-459 to Lys-472 lie on the Extracellular side of the membrane. The chain crosses the membrane as a beta stranded span at residues Tyr-473 to Phe-490. The Periplasmic portion of the chain corresponds to Asp-491 to Gly-493. The beta stranded transmembrane segment at Pro-494–Ala-509 threads the bilayer. The Extracellular segment spans residues Ile-510–Leu-516. Residue Arg-517 coordinates cyanocob(III)alamin. Residues Arg-517 to Trp-529 form a beta stranded membrane-spanning segment. The Periplasmic segment spans residues Gln-530–Phe-534. Residues Asp-535–Asp-550 form a beta stranded membrane-spanning segment. Cyanocob(III)alamin is bound at residue Tyr-551. Topologically, residues Tyr-551 to Gln-557 are extracellular. A beta stranded transmembrane segment spans residues Thr-558–Ala-572. Topologically, residues Tyr-573–Lys-584 are periplasmic. A beta stranded membrane pass occupies residues Ile-585–Val-596. The Extracellular segment spans residues Tyr-597 to Thr-601. The short motif at Tyr-597–Phe-614 is the TonB C-terminal box element. The chain crosses the membrane as a beta stranded span at residues Ala-602 to Phe-614.

Belongs to the TonB-dependent receptor family. BtuB (TC 1.B.14.3.1) subfamily. Interacts with TonB. In terms of assembly, (Microbial infection) The hairpin motif of the receptor-binding domain of colicin E3 (ColE3) interacts with BtuB without displacing BtuB's central plug. An N-terminal fragment of E3 binds OmpF; trimeric complexes with ColE3, BtuB and OmpF can be cross-linked and immunoprecipitated.

The protein resides in the cell outer membrane. With respect to regulation, calcium increases vitamin B12 binding affinity by a factor of 50-100. (Microbial infection) Colicins E1, E3 and K inhibit cyanocobalamin (CN-B12) uptake; E1 and E3 inhibit binding of CN-B12 to cells while colicin K inhibits a later, energy-dependent step of CN-B12. Involved in the active translocation of vitamin B12 (cyanocobalamin) across the outer membrane to the periplasmic space. It derives its energy for transport by interacting with the trans-periplasmic membrane protein TonB. Its function is as follows. (Microbial infection) Acts as a receptor for bacteriophages BF23 and C1, and for A and E colicins. Cyanocobalamin (CN-B12) in solid medium protects against colicins E1 and E3. Does not act as the translocon for colicin E3 (ColE3). The translocon is OmpF; trimeric complexes with ColE3, BtuB and OmpF can be cross-linked and immunoprecipitated. In Escherichia coli (strain K12), this protein is Vitamin B12 transporter BtuB.